The primary structure comprises 131 residues: D-ribose pyranase (131 aa).

Residue H20 is the Proton donor of the active site. Substrate is bound by residues D28, H98, and 120-122 (YAN).

Belongs to the RbsD / FucU family. RbsD subfamily. Homodecamer.

Its subcellular location is the cytoplasm. It carries out the reaction beta-D-ribopyranose = beta-D-ribofuranose. Its pathway is carbohydrate metabolism; D-ribose degradation; D-ribose 5-phosphate from beta-D-ribopyranose: step 1/2. Functionally, catalyzes the interconversion of beta-pyran and beta-furan forms of D-ribose. This Clostridium novyi (strain NT) protein is D-ribose pyranase.